We begin with the raw amino-acid sequence, 788 residues long: E3 ubiquitin-protein ligase SspH2 (788 aa).

The interaction with host membrane and with target proteins stretch occupies residues 1–481; it reads MPFHIGSGCL…PGYSGPIIRF (481 aa). 12 LRR repeats span residues 223–242, 243–264, 265–282, 283–302, 303–324, 325–342, 343–364, 365–382, 383–404, 405–422, 423–445, and 446–466; these read HITT…ALPP, ELRT…PPGL, LELS…ALPS, GLCK…VLPP, GLQE…PSEL, CKLW…MLPS, YKLW…ALPS, GLKE…PSEL, KELM…MLPS, GLLS…IHLS, and SETT…QALR. The tract at residues 482 to 491 is linker; that stretch reads DMAGASAPRE. Positions 492 to 788 are E3 ubiquitin-protein ligase catalytic domain; the sequence is TRALHLAAAD…SYLNVQWRRN (297 aa). The region spanning 494-788 is the NEL domain; it reads ALHLAAADWL…SYLNVQWRRN (295 aa). The active-site Glycyl thioester intermediate is Cys580.

The protein belongs to the LRR-containing bacterial E3 ligase family. In terms of processing, ubiquitinated in the presence of host E1 ubiquitin-activating enzyme UBA1, E2 ubiquitin-conjugating enzyme UBE2D2 and ubiquitin.

The protein resides in the secreted. Its subcellular location is the host cytoplasm. The protein localises to the host apical cell membrane. The catalysed reaction is S-ubiquitinyl-[E2 ubiquitin-conjugating enzyme]-L-cysteine + [acceptor protein]-L-lysine = [E2 ubiquitin-conjugating enzyme]-L-cysteine + N(6)-ubiquitinyl-[acceptor protein]-L-lysine.. Exists in an autoinhibited state in the absence of substrate protein, due to interactions of the leucine-rich repeat domain with the catalytic domain. Is activated upon binding to a substrate protein. Functionally, effector proteins function to alter host cell physiology and promote bacterial survival in host tissues. This protein is an E3 ubiquitin ligase that interferes with host's ubiquitination pathway. This Salmonella typhimurium (strain LT2 / SGSC1412 / ATCC 700720) protein is E3 ubiquitin-protein ligase SspH2 (sspH2).